We begin with the raw amino-acid sequence, 83 residues long: uncharacterized protein (83 aa).

The helical transmembrane segment at 24–44 threads the bilayer; it reads AMTLLIITNTLLIILSYSVLL.

The protein localises to the host membrane. This is an uncharacterized protein from Acidianus sp. F28 (AFV-2).